Consider the following 56-residue polypeptide: ComX pheromone (56 aa).

Positions 1–50 are excised as a propeptide; sequence MMQDLINYFLSYPEVLKKLKNREACLIGFSSNETETIIKAYNDYHLSSPT. At Trp54 the chain carries Tryptophan derivative. Trp54 carries 3'-farnesyl-2',N2-cyclotryptophan lipidation.

As to quaternary structure, interacts directly with the sensor histidine kinase ComP and stimulates its activity. Trp-54 is modified by farnesylation, which is essential for activity. Modified by the tryptophan prenyltransferase ComQ before export to the extracellular environment. The type of isoprenyl derivative differs among the different pherotypes and depends on ComX primary sequence.

Its subcellular location is the secreted. In terms of biological role, part of a major quorum-sensing system that regulates the development of genetic competence. Acts through the activation of the two-component regulatory system ComP/ComA composed of a sensor histidine kinase, ComP, and a response regulator, ComA. The chain is ComX pheromone from Bacillus mojavensis.